A 173-amino-acid polypeptide reads, in one-letter code: Ribosome maturation factor RimM (173 aa).

Residues 98–170 form the PRC barrel domain; that stretch reads EDEYYWCDLL…RMTVSLPEGL (73 aa).

The protein belongs to the RimM family. In terms of assembly, binds ribosomal protein uS19.

The protein localises to the cytoplasm. An accessory protein needed during the final step in the assembly of 30S ribosomal subunit, possibly for assembly of the head region. Essential for efficient processing of 16S rRNA. May be needed both before and after RbfA during the maturation of 16S rRNA. It has affinity for free ribosomal 30S subunits but not for 70S ribosomes. This Geotalea uraniireducens (strain Rf4) (Geobacter uraniireducens) protein is Ribosome maturation factor RimM.